A 341-amino-acid chain; its full sequence is UDP-3-O-acylglucosamine N-acyltransferase (341 aa).

The active-site Proton acceptor is His255.

The protein belongs to the transferase hexapeptide repeat family. LpxD subfamily. Homotrimer.

It catalyses the reaction a UDP-3-O-[(3R)-3-hydroxyacyl]-alpha-D-glucosamine + a (3R)-hydroxyacyl-[ACP] = a UDP-2-N,3-O-bis[(3R)-3-hydroxyacyl]-alpha-D-glucosamine + holo-[ACP] + H(+). The protein operates within bacterial outer membrane biogenesis; LPS lipid A biosynthesis. Catalyzes the N-acylation of UDP-3-O-acylglucosamine using 3-hydroxyacyl-ACP as the acyl donor. Is involved in the biosynthesis of lipid A, a phosphorylated glycolipid that anchors the lipopolysaccharide to the outer membrane of the cell. The protein is UDP-3-O-acylglucosamine N-acyltransferase of Granulibacter bethesdensis (strain ATCC BAA-1260 / CGDNIH1).